A 581-amino-acid polypeptide reads, in one-letter code: Putative aluminum-activated malate transporter 3 (581 aa).

Transmembrane regions (helical) follow at residues 98–118, 122–142, 148–164, 167–187, 201–218, and 231–251; these read MGLA…GLEL, YLWA…ATFS, GLGT…MSWI, MTGN…AFFA, YGFR…VSGY, and FLLI…IYPI.

It belongs to the aromatic acid exporter (TC 2.A.85) family.

It is found in the membrane. Functionally, malate transporter. In Arabidopsis thaliana (Mouse-ear cress), this protein is Putative aluminum-activated malate transporter 3 (ALMT3).